Reading from the N-terminus, the 98-residue chain is uncharacterized protein (98 aa).

This is an uncharacterized protein from Archaeoglobus fulgidus (strain ATCC 49558 / DSM 4304 / JCM 9628 / NBRC 100126 / VC-16).